A 456-amino-acid polypeptide reads, in one-letter code: Two pore potassium channel c (456 aa).

The segment covering methionine 1–proline 19 has biased composition (low complexity). The tract at residues methionine 1–glycine 112 is disordered. Residues methionine 1–proline 152 lie on the Cytoplasmic side of the membrane. Residues histidine 52 to proline 67 show a composition bias toward pro residues. A helical transmembrane segment spans residues alanine 153 to tyrosine 173. Residues aspartate 192–proline 211 constitute an intramembrane region (pore-forming). The helical transmembrane segment at phenylalanine 223–leucine 243 threads the bilayer. At aspartate 244–arginine 279 the chain is on the cytoplasmic side. Residues methionine 280–leucine 300 traverse the membrane as a helical segment. Residues aspartate 310 to phenylalanine 329 constitute an intramembrane region (pore-forming). Residues leucine 336 to leucine 356 traverse the membrane as a helical segment. The Cytoplasmic portion of the chain corresponds to alanine 357–serine 456. EF-hand domains lie at leucine 373–lysine 408 and lysine 412–leucine 447. Positions 386, 388, 390, 392, 397, 425, 431, and 436 each coordinate Ca(2+).

This sequence belongs to the two pore domain potassium channel (TC 1.A.1.7) family. Homodimer.

The protein localises to the membrane. In terms of biological role, inward-rectifying potassium channel. This chain is Two pore potassium channel c (TPKC), found in Oryza sativa subsp. japonica (Rice).